A 514-amino-acid polypeptide reads, in one-letter code: ATP synthase subunit alpha (514 aa).

Residue 170–177 (GDRQIGKT) coordinates ATP.

Belongs to the ATPase alpha/beta chains family. As to quaternary structure, F-type ATPases have 2 components, CF(1) - the catalytic core - and CF(0) - the membrane proton channel. CF(1) has five subunits: alpha(3), beta(3), gamma(1), delta(1), epsilon(1). CF(0) has three main subunits: a(1), b(2) and c(9-12). The alpha and beta chains form an alternating ring which encloses part of the gamma chain. CF(1) is attached to CF(0) by a central stalk formed by the gamma and epsilon chains, while a peripheral stalk is formed by the delta and b chains.

Its subcellular location is the cell inner membrane. It catalyses the reaction ATP + H2O + 4 H(+)(in) = ADP + phosphate + 5 H(+)(out). Functionally, produces ATP from ADP in the presence of a proton gradient across the membrane. The alpha chain is a regulatory subunit. This Pseudomonas fluorescens (strain ATCC BAA-477 / NRRL B-23932 / Pf-5) protein is ATP synthase subunit alpha.